Here is a 400-residue protein sequence, read N- to C-terminus: Jasmonate-induced oxygenase 1 (400 aa).

Residues 248 to 349 (DVGACLRVNY…RVSLAFFYNP (102 aa)) enclose the Fe2OG dioxygenase domain. Position 254 (Arg254) interacts with jasmonate. Residues Asn256 and Tyr258 each contribute to the 2-oxoglutarate site. Fe cation contacts are provided by His273, Asp275, and His330. 2-oxoglutarate contacts are provided by Arg340 and Ser342. Jasmonate is bound by residues Arg379 and Arg383.

This sequence belongs to the iron/ascorbate-dependent oxidoreductase family. The cofactor is L-ascorbate. Fe(2+) is required as a cofactor.

It carries out the reaction jasmonate + 2-oxoglutarate + O2 = (1R,2R)-12-hydroxyjasmonate + succinate + CO2. 2-oxoglutarate-dependent dioxygenase involved in the oxidation of jasmonate (JA), a stress-induced phytohormone synthesized in response to attack by pathogens and herbivores, which triggers the activation of defense responses via the JA-mediated signaling pathway. Converts JA to 12-hydroxyjasmonate (12OH-JA), an inactive form of JA. Prevents over-accumulation of JA and indirectly its bioactive form JA-Ile under stress response. Acts as a negative regulator of JA-mediated defense signaling, by contributing to 12OH-JA accumulation, which represses JA defense responses upon infection by the fungal pathogen Botrytis cinerea and the herbivorous caterpillar Mamestra brassicae. The polypeptide is Jasmonate-induced oxygenase 1 (Arabidopsis thaliana (Mouse-ear cress)).